The chain runs to 318 residues: Ribose-phosphate pyrophosphokinase 1 (318 aa).

Residues 43-45 (DGE) and 102-103 (RQ) contribute to the ATP site. Residues H136 and D176 each contribute to the Mg(2+) site. K199 is an active-site residue. D-ribose 5-phosphate is bound by residues R201, D225, and 229 to 233 (DTAGT).

It belongs to the ribose-phosphate pyrophosphokinase family. Class I subfamily. In terms of assembly, homohexamer. It depends on Mg(2+) as a cofactor.

The protein localises to the cytoplasm. The catalysed reaction is D-ribose 5-phosphate + ATP = 5-phospho-alpha-D-ribose 1-diphosphate + AMP + H(+). It functions in the pathway metabolic intermediate biosynthesis; 5-phospho-alpha-D-ribose 1-diphosphate biosynthesis; 5-phospho-alpha-D-ribose 1-diphosphate from D-ribose 5-phosphate (route I): step 1/1. Involved in the biosynthesis of the central metabolite phospho-alpha-D-ribosyl-1-pyrophosphate (PRPP) via the transfer of pyrophosphoryl group from ATP to 1-hydroxyl of ribose-5-phosphate (Rib-5-P). The polypeptide is Ribose-phosphate pyrophosphokinase 1 (Listeria innocua serovar 6a (strain ATCC BAA-680 / CLIP 11262)).